The chain runs to 363 residues: Aminomethyltransferase (363 aa).

This sequence belongs to the GcvT family. In terms of assembly, the glycine cleavage system is composed of four proteins: P, T, L and H.

It carries out the reaction N(6)-[(R)-S(8)-aminomethyldihydrolipoyl]-L-lysyl-[protein] + (6S)-5,6,7,8-tetrahydrofolate = N(6)-[(R)-dihydrolipoyl]-L-lysyl-[protein] + (6R)-5,10-methylene-5,6,7,8-tetrahydrofolate + NH4(+). In terms of biological role, the glycine cleavage system catalyzes the degradation of glycine. The chain is Aminomethyltransferase from Picosynechococcus sp. (strain ATCC 27264 / PCC 7002 / PR-6) (Agmenellum quadruplicatum).